A 554-amino-acid polypeptide reads, in one-letter code: MKLFILLIVIVFLISNSYSLSSSDSSSDSGSDVQYYSLTSQFQVVQGKQIPGSIAWGYFKDEMNKDGWGKLSIETVSTVSDNIAFKAAGYLEGYLTWEYIYKFSGNYFNSFFNTSNIKEIPTETLTFVSDNWEYMMERVNSSSTTDPYWIQIRNAMSQQIGLYEGYNAAAGEDYQKTFIEIYMINLYGDMGDIVTLTTTPNNEFIPMDRKEVEQLMATTGHCTSIIKLTNNCSDLMSAHTSWADFSVMIRIYKRINIPVASTPYGSETLFSSYPGLLVSIDDFYQIRPSKLHLTETLNTILNQTLYQQINAQSFMYWVRNLVANRLANNGFQWVSIFVENNSGTNNIQFVVLDYKLFTPYSTELQSDLLWIVEQYPGGYQAADVTLTLWEQGYWPSYNRPYFEEVFDILGYPYYVEKFGDLFTYEYNPRANIFRRDHSKLETLQDMMNIIDYNQYKTDPFSMGYPGNSINARFDIKGGSLPSGNPIYSWFYHGTHGGIDGKAINYDMVNSFTAVARNGPTVTSDCPPFNWNDWSLISHQYMPQIYNFTWISINI.

The N-terminal stretch at 1 to 19 (MKLFILLIVIVFLISNSYS) is a signal peptide. N-linked (GlcNAc...) asparagine glycans are attached at residues asparagine 113, asparagine 140, asparagine 231, asparagine 302, asparagine 340, and asparagine 546.

This sequence belongs to the phospholipase B-like family.

The protein resides in the secreted. Its function is as follows. Probable phospholipase. This chain is Phospholipase B-like protein E (plbE), found in Dictyostelium discoideum (Social amoeba).